The sequence spans 561 residues: Shugoshin 1 (561 aa).

Residues 1 to 176 form a necessary for interaction with PPP2CA and PPP2R1A region; the sequence is MAKERCLKKS…DTLGVDFDSG (176 aa). A coiled-coil region spans residues 7–89; that stretch reads LKKSFQDSLE…DIILQLRKEC (83 aa). At Ser14 the chain carries Phosphoserine; by NEK2. Residues 192–200 carry the D-box 1 motif; the sequence is RSSLKKHCN. A Phosphoserine modification is found at Ser256. 2 disordered regions span residues 260–331 and 348–441; these read IQPG…SVSS and FRQK…HLSL. Over residues 267 to 296 the composition is skewed to basic and acidic residues; the sequence is KTKEDILESKSEQTKSKQRDTQERKREEKR. A coiled-coil region spans residues 273–313; that stretch reads LESKSEQTKSKQRDTQERKREEKRKANRRKSKRMSKYKENK. Positions 297-307 are enriched in basic residues; sequence KANRRKSKRMS. The span at 308-318 shows a compositional bias: basic and acidic residues; the sequence is KYKENKSENKK. The KEN box motif lies at 310 to 312; sequence KEN. The segment covering 364-375 has biased composition (low complexity); the sequence is SEVSLCESSGSG. The span at 388–398 shows a compositional bias: polar residues; sequence YIQNPTSNSDR. The span at 410-421 shows a compositional bias: basic and acidic residues; that stretch reads KYTDEKETEGSK. The segment covering 422 to 433 has biased composition (low complexity); that stretch reads PTKTPTTTPPET. Ser436 carries the phosphoserine modification. A D-box 2 motif is present at residues 438 to 446; that stretch reads HLSLKDITN. The PXVXL/I motif signature appears at 451–455; sequence PVVKI. Positions 457 to 465 match the D-box 3 motif; that stretch reads RLSLSPKKN. Ser507 carries the post-translational modification Phosphoserine; by NEK2.

This sequence belongs to the shugoshin family. Interacts with PPP2CA (or PPP2CB), PPP2R1B, PPP2R5A, PPP2R5B, PPP2R5C, PPP2R5D, PPP2R5E, SET, LRRC59, RBM10 (or RBM5), RPL10A, RPL28, RPL7, RPL7A and RPLP1. Interaction with protein phosphatase 2A occurs most probably through direct binding to the regulatory B56 subunits: PPP2R1B, PPP2R5A, PPP2R5B, PPP2R5C, PPP2R5D, PPP2R5E. Interacts with PPP2R1A and NEK2. Isoform 3 interacts with PLK1. Interacts with CDCA8. Ubiquitinated and degraded during mitotic exit by APC/C-Cdh1. Post-translationally, phosphorylation by NEK2 is essential for chromosome congression in mitosis and for the proper attachment of spindle microtubule to the kinetochore. Phosphorylated by PLK1 and AUKRB. As to expression, widely expressed. Highly expressed in testis. Expressed in lung, small intestine, breast, liver and placenta. Strongly overexpressed in 90% of breast cancers tested.

It is found in the nucleus. The protein resides in the chromosome. Its subcellular location is the centromere. The protein localises to the kinetochore. It localises to the cytoplasm. It is found in the cytoskeleton. The protein resides in the spindle pole. Its subcellular location is the microtubule organizing center. The protein localises to the centrosome. It localises to the nucleus speckle. In terms of biological role, plays a central role in chromosome cohesion during mitosis by preventing premature dissociation of cohesin complex from centromeres after prophase, when most of cohesin complex dissociates from chromosomes arms. May act by preventing phosphorylation of the STAG2 subunit of cohesin complex at the centromere, ensuring cohesin persistence at centromere until cohesin cleavage by ESPL1/separase at anaphase. Essential for proper chromosome segregation during mitosis and this function requires interaction with PPP2R1A. Its phosphorylated form is necessary for chromosome congression and for the proper attachment of spindle microtubule to the kinetochore. Necessary for kinetochore localization of PLK1 and CENPF. May play a role in the tension sensing mechanism of the spindle-assembly checkpoint by regulating PLK1 kinetochore affinity. Isoform 3 plays a role in maintaining centriole cohesion involved in controlling spindle pole integrity. Involved in centromeric enrichment of AUKRB in prometaphase. This chain is Shugoshin 1, found in Homo sapiens (Human).